Here is a 330-residue protein sequence, read N- to C-terminus: Src kinase-associated phosphoprotein 2-A (330 aa).

The disordered stretch occupies residues 53-77 (QDFQDKAETDDQEENDGFSLPPDAV). One can recognise a PH domain in the interval 105–208 (DYLRAGYLEK…WINVIMNARG (104 aa)). The tract at residues 228 to 261 (SHEEDIYEELPEESEKPVTGSETPKATPVPVNNT) is disordered. A compositionally biased stretch (polar residues) spans 247–261 (GSETPKATPVPVNNT). Residues 268–329 (DYANFYRGLW…PKAYIIEMYD (62 aa)) form the SH3 domain.

Belongs to the SKAP family. In terms of processing, phosphorylated on tyrosines.

It localises to the cytoplasm. Its function is as follows. May be involved in B-cell and macrophage adhesion processes. May play a role in src signaling pathway. This chain is Src kinase-associated phosphoprotein 2-A (skap2-a), found in Xenopus laevis (African clawed frog).